A 407-amino-acid polypeptide reads, in one-letter code: Semenogelin-2 (407 aa).

The N-terminal stretch at 1-23 is a signal peptide; sequence MKSIILFVLSLVLILEKQAAVMG. Disordered stretches follow at residues 25–60, 133–158, 173–192, and 272–407; these read KDGSKGQLPSGSSQFPHGQKGQHYFGQKDQQHTKSK, GQAHCGTQNPSQDQGNSPSGKGLSSQ, KEQASASGAQKGRTQGGSQS, and NLNQ…NKIS. 3 stretches are compositionally biased toward polar residues: residues 31–40, 137–158, and 174–192; these read QLPSGSSQFP, CGTQNPSQDQGNSPSGKGLSSQ, and EQASASGAQKGRTQGGSQS. Residues 292–310 show a composition bias toward basic and acidic residues; it reads RTEERQLNHGEKSVQKDVS. Over residues 325–334 the composition is skewed to polar residues; the sequence is KSQNQVTIHS. Residues 335 to 345 show a composition bias toward basic and acidic residues; the sequence is QDQEHGHKENK. Residues 372 to 397 are compositionally biased toward polar residues; that stretch reads GSISIQTEEQIHGKSQNXVRIPSQAQ.

This sequence belongs to the semenogelin family. In terms of assembly, interacts with SERPINA5.

Its subcellular location is the secreted. In terms of biological role, participates in the formation of a gel matrix (sperm coagulum) entrapping the accessory gland secretions and ejaculated spermatozoa. The protein is Semenogelin-2 (SEMG2) of Pan troglodytes (Chimpanzee).